Reading from the N-terminus, the 290-residue chain is TP53-target gene 5 protein (290 aa).

Basic residues predominate over residues 1–13; sequence MSPSAKKRPKNSR. 2 disordered regions span residues 1–29 and 114–178; these read MSPS…TEQP and KLES…RQPL. Composition is skewed to basic and acidic residues over residues 16–26, 114–130, and 138–167; these read KMQDEKLRDET, KLES…KEWK, and RNKE…RDDS.

As to quaternary structure, interacts with p53/TP53. In terms of tissue distribution, highly expressed in heart, brain and small intestine. Less abundant in skeletal muscle, spleen, prostate, ovary and colon. A smaller transcript is expressed specifically in the testis.

Its subcellular location is the cytoplasm. It is found in the nucleus. In terms of biological role, may play a significant role in p53/TP53-mediating signaling pathway. This is TP53-target gene 5 protein (TP53TG5) from Homo sapiens (Human).